A 454-amino-acid polypeptide reads, in one-letter code: Keratin, type I cuticular Ha5 (454 aa).

The head stretch occupies residues 1–97 (MASKCLKASF…FGEGILTGNE (97 aa)). The 311-residue stretch at 97-407 (EKETMQFLND…GLLDSEDCKL (311 aa)) folds into the IF rod domain. The tract at residues 98–125 (KETMQFLNDRLASYLEKCGSWSGRTRSW) is coil 1A. Residues 134 to 142 (SNSALPVPD) form a linker 1 region. Residues 143–243 (YQSYFQTIEE…HEEEVNSLRC (101 aa)) form a coil 1B region. The linker 12 stretch occupies residues 244–259 (QLGDRLNVEVDAAPPV). A coil 2 region spans residues 260 to 403 (DLNRVLNEMR…NTYRGLLDSE (144 aa)). Positions 404–454 (DCKLPCNPCAPDHSPSKSCLPCLPAASCGPGMARTTCSPRPICVPCPGSRF) are tail.

This sequence belongs to the intermediate filament family.

The protein is Keratin, type I cuticular Ha5 of Bos taurus (Bovine).